The sequence spans 249 residues: Granaticin polyketide synthase putative ketoacyl reductase 2 (249 aa).

Residue 12–36 (LVTGSSSGIGQTVAQRLAAEGYRVV) participates in NAD(+) binding. Serine 144 serves as a coordination point for substrate. Tyrosine 157 functions as the Proton acceptor in the catalytic mechanism.

Belongs to the short-chain dehydrogenases/reductases (SDR) family.

The protein operates within antibiotic biosynthesis; granaticin biosynthesis. The sequence is that of Granaticin polyketide synthase putative ketoacyl reductase 2 (gra-orf6) from Streptomyces violaceoruber.